A 132-amino-acid polypeptide reads, in one-letter code: uncharacterized protein (132 aa).

This is an uncharacterized protein from Bacillus subtilis (strain 168).